We begin with the raw amino-acid sequence, 722 residues long: MAR-binding filament-like protein 1-1 (722 aa).

Residues 1–20 (MGSSCFPQSPLSHSLFSSSS) are disordered. The transit peptide at 1 to 50 (MGSSCFPQSPLSHSLFSSSSLSSSQFTPLLFSPRNAQKCKKKMPAMACIH) directs the protein to the chloroplast. The N-terminal 34 residues, 51–84 (SENQKESEFCSRRTILFVGFSVLPLLSLRANAFE), are a transit peptide targeting the thylakoid. Residues 85 to 112 (GLSVDSQVKAQPQKEETEQTIQGNAENP) are Lumenal, thylakoid-facing. The helical transmembrane segment at 113–133 (FFSLLNGLGVFGSGVLGSLYA) threads the bilayer. Over 134 to 722 (LARNEKAVSD…TQPASQQESS (589 aa)) the chain is Stromal. Residues 146–679 (IESMKNKLKE…KGEILRLRTQ (534 aa)) are a coiled coil. The tract at residues 687–722 (VNNEEKVEAGEKAAVTVKRTRRRKTATQPASQQESS) is disordered. The short motif at 705 to 712 (RTRRRKTA) is the Nuclear localization signal element.

Interacts with PTST2; the interaction is essential for the initiation of starch granules biosynthesis in leaf chloroplasts, for the correct location of the process in the stromal spaces between the thylakoid membranes, and for the association of PTST2 with the thylakoid membranes. Post-translationally, predicted to be translocated into the thylakoid by the Tat system.

It is found in the plastid. Its subcellular location is the chloroplast. The protein resides in the chloroplast thylakoid membrane. It localises to the chloroplast stroma. The protein localises to the chloroplast nucleoid. It is found in the nucleus. Its subcellular location is the nucleus matrix. Functionally, required for the initiation of starch granules biosynthesis in leaf chloroplasts. Anchored to the thylakoid membranes with its C-terminus facing into the stroma where it is essential for localizing PTST2 and SS4 to the stromal spaces between the thylakoid membranes in order to begin starch granule formation. Associated with leaf chloroplastic nucleoids in vivo. Binds to various chloroplastic double-stranded DNA fragments without particular sequence specificity in vitro. May function at the interface between nucleoids and thylakoids possibly by anchoring nucleoids to the thylakoid membrane system in mature chloroplasts. Likely to participate in nuclear architecture by connecting chromatin with the nuclear matrix and potentially with the nuclear envelope. In Nicotiana tabacum (Common tobacco), this protein is MAR-binding filament-like protein 1-1.